The sequence spans 445 residues: Rab GDP dissociation inhibitor beta (445 aa).

M1 is subject to N-acetylmethionine. K57 is modified (N6-succinyllysine). The residue at position 112 (K112) is an N6-acetyllysine. The residue at position 130 (S130) is a Phosphoserine. Residue K269 is modified to N6-acetyllysine. The residue at position 382 (S382) is a Phosphoserine.

Belongs to the Rab GDI family. In terms of assembly, interacts with RHOH. Interacts with the GDP-bound inactive forms of RAB3A, RAB3B, RAB3C, RAB5A, RAB5B, RAB5C, RAB8A, RAB8B, RAB10, RAB12, RAB35, and RAB43; binds RAB3D to a lesser extent. Interacts with DZIP1; this interaction negatively regulates the interaction of GDI2 with GDP-bound RAB8A. Ubiquitously expressed.

It is found in the cytoplasm. The protein resides in the membrane. It localises to the golgi apparatus. Its subcellular location is the trans-Golgi network. Functionally, GDP-dissociation inhibitor preventing the GDP to GTP exchange of most Rab proteins. By keeping these small GTPases in their inactive GDP-bound form regulates intracellular membrane trafficking. Negatively regulates protein transport to the cilium and ciliogenesis through the inhibition of RAB8A. The polypeptide is Rab GDP dissociation inhibitor beta (Gdi2) (Rattus norvegicus (Rat)).